The following is a 69-amino-acid chain: DNA gyrase inhibitor YacG (69 aa).

Positions 1-15 (MSDEPEHTAKVEPLR) are enriched in basic and acidic residues. A disordered region spans residues 1 to 22 (MSDEPEHTAKVEPLRKPLPCPE). The Zn(2+) site is built by Cys-20, Cys-23, Cys-35, and Cys-39.

This sequence belongs to the DNA gyrase inhibitor YacG family. Interacts with GyrB. The cofactor is Zn(2+).

Functionally, inhibits all the catalytic activities of DNA gyrase by preventing its interaction with DNA. Acts by binding directly to the C-terminal domain of GyrB, which probably disrupts DNA binding by the gyrase. This chain is DNA gyrase inhibitor YacG, found in Allorhizobium ampelinum (strain ATCC BAA-846 / DSM 112012 / S4) (Agrobacterium vitis (strain S4)).